The primary structure comprises 474 residues: Probable glycine dehydrogenase (decarboxylating) subunit 2 (474 aa).

Position 262 is an N6-(pyridoxal phosphate)lysine (Lys262).

This sequence belongs to the GcvP family. C-terminal subunit subfamily. The glycine cleavage system is composed of four proteins: P, T, L and H. In this organism, the P 'protein' is a heterodimer of two subunits. The cofactor is pyridoxal 5'-phosphate.

It carries out the reaction N(6)-[(R)-lipoyl]-L-lysyl-[glycine-cleavage complex H protein] + glycine + H(+) = N(6)-[(R)-S(8)-aminomethyldihydrolipoyl]-L-lysyl-[glycine-cleavage complex H protein] + CO2. In terms of biological role, the glycine cleavage system catalyzes the degradation of glycine. The P protein binds the alpha-amino group of glycine through its pyridoxal phosphate cofactor; CO(2) is released and the remaining methylamine moiety is then transferred to the lipoamide cofactor of the H protein. This is Probable glycine dehydrogenase (decarboxylating) subunit 2 from Thermotoga petrophila (strain ATCC BAA-488 / DSM 13995 / JCM 10881 / RKU-1).